A 419-amino-acid polypeptide reads, in one-letter code: Putative trans-acting enoyl reductase MT2525 (419 aa).

An Isoglutamyl lysine isopeptide (Lys-Gln) (interchain with Q-Cter in protein Pup) cross-link involves residue Lys-127. The tract at residues 197–232 (NDPDARRQLSDPYMLSPDRGAEPELGPQPDLPSRRG) is disordered. Residues 284-304 (VLAPVVSVVGGGVGNAMFGLA) traverse the membrane as a helical segment.

This sequence belongs to the saccharopine dehydrogenase family. Enoyl reductase subfamily.

It localises to the cell membrane. The protein is Putative trans-acting enoyl reductase MT2525 of Mycobacterium tuberculosis (strain CDC 1551 / Oshkosh).